The sequence spans 411 residues: MREHFNDGVEFARFLAHRFVTDKAPNSAAALTYTTLFAVVPMMTVMFSMLSLIPAFHGMGESIQTFIFRNFVPSAGEAVETYLKSFTTQARHLTWVGVVFLAVTAFTMLVTIEKAFNEIWRVRQPRRGVGRFLLYWAILSLGPLLLGAGFAVTTYITSLSLLHGPDALPGAETLLGLMPLAFSVAAFTLLYSAVPNARVPVRHALMGGVFTAVLFEAAKTLFGLYVSLFPGYQLIYGAFATVPIFLLWIYLSWMIVLFGAVLVCNLSSSRLWRRRSLPKLIVLLGVLRVFHQRQQLGQSLRLTHLHRAGWLLPEDEWEELLDFLEKEQFVCRAGGGEWVLCRDLGAYSLHRLLNRCPWPMPSRERMPANLDEAWYPPFQQAMERLQVEQEALFGKSLAHWLADGTSGAKVT.

6 helical membrane-spanning segments follow: residues 36 to 56 (LFAVVPMMTVMFSMLSLIPAF), 92 to 112 (HLTWVGVVFLAVTAFTMLVTI), 132 to 152 (FLLYWAILSLGPLLLGAGFAV), 174 to 194 (LLGLMPLAFSVAAFTLLYSAV), 207 to 229 (GGVFTAVLFEAAKTLFGLYVSLF), and 244 to 264 (IFLLWIYLSWMIVLFGAVLVC).

This sequence belongs to the UPF0761 family.

It localises to the cell inner membrane. In Pseudomonas aeruginosa (strain UCBPP-PA14), this protein is UPF0761 membrane protein PA14_51960.